We begin with the raw amino-acid sequence, 176 residues long: Ribosome rescue factor SmrB (176 aa).

Positions 93 to 168 (LDLHGYRQSE…GDAALLVLID (76 aa)) constitute a Smr domain.

This sequence belongs to the SmrB family. Associates with collided ribosomes, but not with correctly translating polysomes.

Functionally, acts as a ribosome collision sensor. Detects stalled/collided disomes (pairs of ribosomes where the leading ribosome is stalled and a second ribosome has collided with it) and endonucleolytically cleaves mRNA at the 5' boundary of the stalled ribosome. Stalled/collided disomes form a new interface (primarily via the 30S subunits) that binds SmrB. Cleaved mRNA becomes available for tmRNA ligation, leading to ribosomal subunit dissociation and rescue of stalled ribosomes. This is Ribosome rescue factor SmrB from Shewanella sp. (strain W3-18-1).